The primary structure comprises 108 residues: Phosphocarrier protein HPr (108 aa).

The HPr domain occupies 21–108 (ELQATCIVKN…DAFSSGFGEL (88 aa)). Catalysis depends on histidine 35, which acts as the Pros-phosphohistidine intermediate.

This sequence belongs to the HPr family.

It is found in the cytoplasm. In terms of biological role, general (non sugar-specific) component of the phosphoenolpyruvate-dependent sugar phosphotransferase system (sugar PTS). This major carbohydrate active-transport system catalyzes the phosphorylation of incoming sugar substrates concomitantly with their translocation across the cell membrane. The phosphoryl group from phosphoenolpyruvate (PEP) is transferred to the phosphoryl carrier protein HPr by enzyme I. Phospho-HPr then transfers it to the PTS EIIA domain. This chain is Phosphocarrier protein HPr (ptsH), found in Chlamydia pneumoniae (Chlamydophila pneumoniae).